The following is a 259-amino-acid chain: 3-deoxy-manno-octulosonate cytidylyltransferase (259 aa).

Belongs to the KdsB family.

The protein localises to the cytoplasm. The enzyme catalyses 3-deoxy-alpha-D-manno-oct-2-ulosonate + CTP = CMP-3-deoxy-beta-D-manno-octulosonate + diphosphate. The protein operates within nucleotide-sugar biosynthesis; CMP-3-deoxy-D-manno-octulosonate biosynthesis; CMP-3-deoxy-D-manno-octulosonate from 3-deoxy-D-manno-octulosonate and CTP: step 1/1. It functions in the pathway bacterial outer membrane biogenesis; lipopolysaccharide biosynthesis. Functionally, activates KDO (a required 8-carbon sugar) for incorporation into bacterial lipopolysaccharide in Gram-negative bacteria. In Xanthomonas axonopodis pv. citri (strain 306), this protein is 3-deoxy-manno-octulosonate cytidylyltransferase.